Here is a 91-residue protein sequence, read N- to C-terminus: Small ribosomal subunit protein bS16 (91 aa).

Belongs to the bacterial ribosomal protein bS16 family.

The chain is Small ribosomal subunit protein bS16 from Staphylococcus haemolyticus (strain JCSC1435).